A 305-amino-acid chain; its full sequence is MAGRLVLGTRGSPLALAQAEACAAGLRAAGFAVELRRIRTTSDRRPDDPLSVIDQRDVFTRQLDEALLAGEVDLAVHSMKDVPTEVPEGIVLAAVAGRADPSDALVSEGGWGVDGLPEGARVATSSLRRRAQLLHRRPDLRVVEIRGNVDTRIRKMRAGAAEAVVLARAGLVRLGLEVPHAVIPHDVLLPAVGQGALAVAVRRGDPRLEEIRRALNDPAAEREVAAERALLRALEGGCRVPVGARAVAGGRGVLLRGVVVSPDGAALCGGEERGEEPEEVGRRLAARLLERGAAGILGFVRGVKP.

Cysteine 238 is modified (S-(dipyrrolylmethanemethyl)cysteine).

It belongs to the HMBS family. In terms of assembly, monomer. Requires dipyrromethane as cofactor.

It catalyses the reaction 4 porphobilinogen + H2O = hydroxymethylbilane + 4 NH4(+). Its pathway is porphyrin-containing compound metabolism; protoporphyrin-IX biosynthesis; coproporphyrinogen-III from 5-aminolevulinate: step 2/4. Its function is as follows. Tetrapolymerization of the monopyrrole PBG into the hydroxymethylbilane pre-uroporphyrinogen in several discrete steps. The protein is Porphobilinogen deaminase of Rubrobacter xylanophilus (strain DSM 9941 / JCM 11954 / NBRC 16129 / PRD-1).